The following is a 483-amino-acid chain: MSTARTENPVIMGLSSQNGQLRGPVKPSGGPGGGGTQTQQQMNQLKNANTINNGTQQQAQSMTTTIKPGDDWKKTLKLPPKDLRIKTSDVTSTKGNEFEDYCLKRELLMGIFEMGWEKPSPIQEESIPIALSGRDILARAKNGTGKSGAYLIPLLERLDLKKDNIQAMVIVPTRELALQVSQICIQVSKHMGGAKVMATTGGTNLRDDIMRLDDTVHVVIATPGRILDLIKKGVAKVEHVQMIVLDEADKLLSQDFVQIMEDIILTLPKNRQILLYSATFPLSVQKFMNSHLQKPYEINLMEELTLKGVTQYYAYVTERQKVHCLNTLFSRLQINQSIIFCNSSQRVELLAKKISQLGYSCFYIHAKMRQEHRNRVFHDFRNGLCRNLVCTDLFTRGIDIQAVNVVINFDFPKLAETYLHRIGRSGRFGHLGLAINLITYDDRFNLKSIEEQLGTEIKPIPSNIDKSLYVAEYHSEPVEDEKQ.

Disordered stretches follow at residues 1 to 39 (MSTA…TQTQ) and 55 to 75 (TQQQ…WKKT). Residues 55–66 (TQQQAQSMTTTI) show a composition bias toward polar residues. Positions 96 to 124 (NEFEDYCLKRELLMGIFEMGWEKPSPIQE) match the Q motif motif. Positions 127–298 (IPIALSGRDI…NSHLQKPYEI (172 aa)) constitute a Helicase ATP-binding domain. 140-147 (AKNGTGKS) lines the ATP pocket. The DEAD box motif lies at 246–249 (DEAD). In terms of domain architecture, Helicase C-terminal spans 308-468 (GVTQYYAYVT…PIPSNIDKSL (161 aa)).

Belongs to the DEAD box helicase family. DDX6/DHH1 subfamily.

The protein localises to the cytoplasm. The protein resides in the P-body. Its subcellular location is the nucleus. The enzyme catalyses ATP + H2O = ADP + phosphate + H(+). Essential for the formation of P-bodies, cytosolic membrane-less ribonucleoprotein granules involved in RNA metabolism through the coordinated storage of mRNAs encoding regulatory functions. Plays a role in P-bodies to coordinate the storage of translationally inactive mRNAs in the cytoplasm and prevent their degradation. This Gallus gallus (Chicken) protein is Probable ATP-dependent RNA helicase DDX6 (DDX6).